A 283-amino-acid chain; its full sequence is Bifunctional protein FolD (283 aa).

NADP(+) is bound by residues 165 to 167 (GRG), Thr192, and Val233.

This sequence belongs to the tetrahydrofolate dehydrogenase/cyclohydrolase family. In terms of assembly, homodimer.

It carries out the reaction (6R)-5,10-methylene-5,6,7,8-tetrahydrofolate + NADP(+) = (6R)-5,10-methenyltetrahydrofolate + NADPH. The catalysed reaction is (6R)-5,10-methenyltetrahydrofolate + H2O = (6R)-10-formyltetrahydrofolate + H(+). Its pathway is one-carbon metabolism; tetrahydrofolate interconversion. Its function is as follows. Catalyzes the oxidation of 5,10-methylenetetrahydrofolate to 5,10-methenyltetrahydrofolate and then the hydrolysis of 5,10-methenyltetrahydrofolate to 10-formyltetrahydrofolate. The chain is Bifunctional protein FolD from Mycolicibacterium smegmatis (strain ATCC 700084 / mc(2)155) (Mycobacterium smegmatis).